The chain runs to 210 residues: NAD(P)H-quinone oxidoreductase subunit I (210 aa).

4Fe-4S ferredoxin-type domains are found at residues 55–84 (GRIH…VDWV) and 95–124 (RNYS…MTEE). Residues Cys-64, Cys-67, Cys-70, Cys-74, Cys-104, Cys-107, Cys-110, and Cys-114 each coordinate [4Fe-4S] cluster.

This sequence belongs to the complex I 23 kDa subunit family. In terms of assembly, NDH-1 is composed of at least 11 different subunits. [4Fe-4S] cluster serves as cofactor.

It is found in the cellular thylakoid membrane. It carries out the reaction a plastoquinone + NADH + (n+1) H(+)(in) = a plastoquinol + NAD(+) + n H(+)(out). The enzyme catalyses a plastoquinone + NADPH + (n+1) H(+)(in) = a plastoquinol + NADP(+) + n H(+)(out). In terms of biological role, NDH-1 shuttles electrons from an unknown electron donor, via FMN and iron-sulfur (Fe-S) centers, to quinones in the respiratory and/or the photosynthetic chain. The immediate electron acceptor for the enzyme in this species is believed to be plastoquinone. Couples the redox reaction to proton translocation, and thus conserves the redox energy in a proton gradient. This Synechococcus sp. (strain CC9902) protein is NAD(P)H-quinone oxidoreductase subunit I.